The following is a 224-amino-acid chain: uncharacterized protein (224 aa).

This is an uncharacterized protein from Mycobacterium tuberculosis (strain CDC 1551 / Oshkosh).